Here is a 273-residue protein sequence, read N- to C-terminus: Large ribosomal subunit protein uL2 (273 aa).

The tract at residues 224–260 (AMNPVDHPHGGGEGKTSGGRHPVTPWGKKTKGKKTRK) is disordered. Residues 251 to 260 (KKTKGKKTRK) are compositionally biased toward basic residues.

Belongs to the universal ribosomal protein uL2 family. As to quaternary structure, part of the 50S ribosomal subunit. Forms a bridge to the 30S subunit in the 70S ribosome.

Its function is as follows. One of the primary rRNA binding proteins. Required for association of the 30S and 50S subunits to form the 70S ribosome, for tRNA binding and peptide bond formation. It has been suggested to have peptidyltransferase activity; this is somewhat controversial. Makes several contacts with the 16S rRNA in the 70S ribosome. This Orientia tsutsugamushi (strain Ikeda) (Rickettsia tsutsugamushi) protein is Large ribosomal subunit protein uL2.